Here is a 549-residue protein sequence, read N- to C-terminus: Coiled-coil domain-containing protein 102A (549 aa).

Disordered regions lie at residues M1 to A61, L135 to E195, and P207 to A248. A phosphoserine mark is found at S12, S26, and S28. A compositionally biased stretch (pro residues) spans S37–L55. A coiled-coil region spans residues E69–R160. 2 stretches are compositionally biased toward basic and acidic residues: residues L135–R158 and A165–A187. Coiled-coil stretches lie at residues K263–A398 and K426–L517. Disordered stretches follow at residues E472 to N496 and R509 to A549. Positions E530–A549 are enriched in acidic residues. S536 is modified (phosphoserine).

The protein is Coiled-coil domain-containing protein 102A (Ccdc102a) of Mus musculus (Mouse).